A 329-amino-acid polypeptide reads, in one-letter code: MTERPPSEAARSDPQLEGQDAAEARMAPPHLVLLNGVAKETSRAAPAEPPVIELGARSGAGGGPASGGGAARDLKGRDAVAAEARLRVPTTELCRPPGPAPAPAPASAPAELPGDGRMVQLSPPALAAPAGPGRALLYSLSQPLASLGSGFFGEPDAFPMFTNNNRVKRRPSPYEMEISDGPHTKVVRRIFTNSRERWRQQNVNGAFAELRKLIPTHPPDKKLSKNEILRLAMKYINFLAKLLNDQEEEGTQRAKPGKDPVVGAGGGGAGGGIPPEDLLQDVLSPNSSCGSSLDGAASPDSYTEEPTPKHTSRSLHPALLPAADGAGPR.

Disordered stretches follow at residues 1 to 28, 40 to 78, and 91 to 125; these read MTER…RMAP, ETSR…KGRD, and TELC…SPPA. Phosphoserine is present on serine 12. Positions 58 to 70 are enriched in gly residues; the sequence is SGAGGGPASGGGA. The segment covering 96-106 has biased composition (pro residues); the sequence is PPGPAPAPAPA. Serine 122 bears the Phosphoserine; by MAPK mark. The residue at position 172 (serine 172) is a Phosphoserine. The region spanning 187 to 239 is the bHLH domain; sequence VRRIFTNSRERWRQQNVNGAFAELRKLIPTHPPDKKLSKNEILRLAMKYINFL. A disordered region spans residues 247–329; that stretch reads EEEGTQRAKP…LPAADGAGPR (83 aa). Over residues 263 to 273 the composition is skewed to gly residues; it reads GAGGGGAGGGI. The span at 317 to 329 shows a compositional bias: low complexity; that stretch reads PALLPAADGAGPR.

As to quaternary structure, efficient DNA binding requires dimerization with another bHLH protein. Forms heterodimers with TCF3. Binds to the LIM domain containing protein LMO2 and to DRG1. Can assemble in a complex with LDB1 and LMO2. Component of a TAL-1 complex composed at least of CBFA2T3, LDB1, TAL1 and TCF3. Interacts with SBNO2; this interaction inhibits TAL1 occupancy of the DCSTAMP promoter, leading to the activation of the DCSTAMP promoter by the transcription factor MITF. Phosphorylated on serine residues. Phosphorylation of Ser-122 by MAPK is strongly stimulated by hypoxia. Post-translationally, ubiquitinated; subsequent to hypoxia-dependent phosphorylation of Ser-122, ubiquitination targets the protein for rapid degradation via the ubiquitin system. This process may be characteristic for microvascular endothelial cells, since it could not be observed in large vessel endothelial cells. As to expression, erythroid and myeloid cells.

The protein localises to the nucleus. Implicated in the genesis of hemopoietic malignancies. It may play an important role in hemopoietic differentiation. Serves as a positive regulator of erythroid differentiation. This chain is T-cell acute lymphocytic leukemia protein 1 homolog (Tal1), found in Mus musculus (Mouse).